The chain runs to 899 residues: Translation initiation factor IF-2 (899 aa).

Disordered regions lie at residues 65 to 84 (KTRSTLNVPSTGGKSKSVQI) and 91 to 310 (TYVK…SFNK). A compositionally biased stretch (polar residues) spans 68–82 (STLNVPSTGGKSKSV). Positions 108–164 (QARREAEEQAQRAAEEQAKREAELREAAEKAKRAADEQAKREAAEKAKRDVAEKEKV) are enriched in basic and acidic residues. A compositionally biased stretch (polar residues) spans 165–174 (TNQQNENMTK). Residues 177–236 (QAEKAKREAEAAELKRKAEEAARLKVEEEARRIAEEARRMAEENAGRWEAESAKPEESAD) show a composition bias toward basic and acidic residues. The span at 262–276 (SRSRAGKVTKQKKGN) shows a compositional bias: basic residues. Residues 277–290 (RQSESKADREEARA) are compositionally biased toward basic and acidic residues. The 170-residue stretch at 398–567 (ARAPVVTIMG…LLQAEVLELK (170 aa)) folds into the tr-type G domain. Residues 407–414 (GHVDHGKT) are G1. 407–414 (GHVDHGKT) is a binding site for GTP. A G2 region spans residues 432–436 (GITQH). Residues 453 to 456 (DTPG) form a G3 region. Residues 453–457 (DTPGH) and 507–510 (NKID) each bind GTP. The G4 stretch occupies residues 507–510 (NKID). Positions 543–545 (SAK) are G5.

It belongs to the TRAFAC class translation factor GTPase superfamily. Classic translation factor GTPase family. IF-2 subfamily.

It is found in the cytoplasm. In terms of biological role, one of the essential components for the initiation of protein synthesis. Protects formylmethionyl-tRNA from spontaneous hydrolysis and promotes its binding to the 30S ribosomal subunits. Also involved in the hydrolysis of GTP during the formation of the 70S ribosomal complex. The sequence is that of Translation initiation factor IF-2 from Pectobacterium carotovorum subsp. carotovorum (strain PC1).